A 94-amino-acid polypeptide reads, in one-letter code: Small ribosomal subunit protein bS18 (94 aa).

The protein belongs to the bacterial ribosomal protein bS18 family. In terms of assembly, part of the 30S ribosomal subunit. Forms a tight heterodimer with protein bS6.

Functionally, binds as a heterodimer with protein bS6 to the central domain of the 16S rRNA, where it helps stabilize the platform of the 30S subunit. This is Small ribosomal subunit protein bS18 from Leptothrix cholodnii (strain ATCC 51168 / LMG 8142 / SP-6) (Leptothrix discophora (strain SP-6)).